We begin with the raw amino-acid sequence, 74 residues long: M-myrmeciitoxin-Mb1a (74 aa).

Positions 1-26 (MKLSCLLLTLAIIVVLTIVHAPNVEA) are cleaved as a signal peptide. A propeptide spanning residues 27 to 50 (KALADPESDAVGFADAVGEADPNA) is cleaved from the precursor. Glutamine 73 carries the glutamine amide modification.

Belongs to the formicidae venom precursor-01 superfamily. Ant pilosulin family. As to expression, expressed by the venom gland.

Its subcellular location is the secreted. In terms of biological role, shows moderate activity against E.coli and S.aureus (MIC&lt;25 uM), slight activity against B.subtilis (MIC&lt;50 uM), and no activity against L.garvieae, P.aeruginosa, C.albicans, and S.cerevisiae. Has no hemolytic nor cytolytic activity. Causes an IgE-independent histamine release. The protein is M-myrmeciitoxin-Mb1a of Myrmecia banksi (Jack jumper ant).